Consider the following 271-residue polypeptide: Interleukin-1 alpha (271 aa).

A propeptide spanning residues 1-112 (MAKVPDMFED…DSEEEIIKPR (112 aa)) is cleaved from the precursor. N6-acetyllysine is present on Lys-82. A nuclear localization signal (NLS) region spans residues 82-86 (KKRRL). A Phosphoserine modification is found at Ser-87. Residues Asn-102, Asn-121, Asn-137, Asn-141, and Asn-211 are each glycosylated (N-linked (GlcNAc...) asparagine).

The protein belongs to the IL-1 family. As to quaternary structure, monomer. Interacts with TMED10; the interaction mediates the translocation from the cytoplasm into the ERGIC (endoplasmic reticulum-Golgi intermediate compartment) and thereby secretion. Interacts with IL1R1. Interacts with S100A13; this interaction is the first step in the export of IL1A, followed by direct translocation of this complex across the plasma membrane. Acetylated within its nuclear localization sequence, which impacts subcellular localization. In terms of processing, proteolytic processed by CAPN1 in a calcium-dependent manner. Cleavage from 31 kDa precursor to 18 kDa biologically active molecules. Post-translationally, phosphorylated. Phosphorylation greatly enhances susceptibility to digestion and promotes the conversion of pre-IL1A alpha to the biologically active IL1A.

It localises to the nucleus. It is found in the cytoplasm. The protein localises to the secreted. Cytokine constitutively present intracellularly in nearly all resting non-hematopoietic cells that plays an important role in inflammation and bridges the innate and adaptive immune systems. After binding to its receptor IL1R1 together with its accessory protein IL1RAP, forms the high affinity interleukin-1 receptor complex. Signaling involves the recruitment of adapter molecules such as MYD88, IRAK1 or IRAK4. In turn, mediates the activation of NF-kappa-B and the three MAPK pathways p38, p42/p44 and JNK pathways. Within the cell, acts as an alarmin and cell death results in its liberation in the extracellular space after disruption of the cell membrane to induce inflammation and alert the host to injury or damage. In addition to its role as a danger signal, which occurs when the cytokine is passively released by cell necrosis, directly senses DNA damage and acts as signal for genotoxic stress without loss of cell integrity. The polypeptide is Interleukin-1 alpha (IL1A) (Macaca mulatta (Rhesus macaque)).